Consider the following 355-residue polypeptide: Isocitrate dehydrogenase [NAD] subunit gamma, mitochondrial (355 aa).

A transit peptide (mitochondrion) is located at residue I1. Citrate-binding residues include T82 and N95. Substrate is bound by residues R98, R129, and D216. Mn(2+) is bound at residue D216. ADP-binding residues include N274, T275, and N286.

It belongs to the isocitrate and isopropylmalate dehydrogenases family. In terms of assembly, heterooligomer of subunits alpha (IDH3A), beta (IDH3B), and gamma (IDH3G) in the apparent ratio of 2:1:1. The heterodimer containing one IDH3A and one IDH3B subunit and the heterodimer containing one IDH3A and one IDH3G subunit assemble into a heterotetramer (which contains two subunits of IDH3A, one of IDH3B and one of IDH3G) and further into the heterooctamer. The cofactor is Mg(2+). Mn(2+) is required as a cofactor.

The protein resides in the mitochondrion. With respect to regulation, the heterotetramer and the heterodimer composed of IDH3A and IDH3G subunits can be allosterically activated by citrate (CIT) or/and ADP, and the two activators can act independently or synergistically. The heterodimer composed of IDH3A and IDH3B subunits cannot be allosterically regulated and the allosteric regulation of the heterotetramer is through the IDH3G subunit and not the IDH3B subunit. The IDH3G subunit contains the allosteric site which consists of a CIT-binding site and an ADP-binding site, and the binding of CIT and ADP causes conformational changes at the allosteric site which are transmitted to the active site in the catalytic subunit (IDH3A) through a cascade of conformational changes at the heterodimer interface, leading to stabilization of the isocitrate-binding at the active site and thus activation of the enzyme. ATP can activate the heterotetramer and the heterodimer composed of IDH3A and IDH3G subunits at low concentrations but inhibits their activities at high concentrations, whereas ATP exhibits only inhibitory effect on the heterodimer composed of IDH3A and IDH3B subunits. Functionally, regulatory subunit which plays a role in the allosteric regulation of the enzyme catalyzing the decarboxylation of isocitrate (ICT) into alpha-ketoglutarate. The heterodimer composed of the alpha (IDH3A) and beta (IDH3B) subunits and the heterodimer composed of the alpha (IDH3A) and gamma (IDH3G) subunits, have considerable basal activity but the full activity of the heterotetramer (containing two subunits of IDH3A, one of IDH3B and one of IDH3G) requires the assembly and cooperative function of both heterodimers. This chain is Isocitrate dehydrogenase [NAD] subunit gamma, mitochondrial (IDH3G), found in Macaca fascicularis (Crab-eating macaque).